We begin with the raw amino-acid sequence, 102 residues long: Putative pterin-4-alpha-carbinolamine dehydratase (102 aa).

The protein belongs to the pterin-4-alpha-carbinolamine dehydratase family.

The catalysed reaction is (4aS,6R)-4a-hydroxy-L-erythro-5,6,7,8-tetrahydrobiopterin = (6R)-L-erythro-6,7-dihydrobiopterin + H2O. In Psychromonas ingrahamii (strain DSM 17664 / CCUG 51855 / 37), this protein is Putative pterin-4-alpha-carbinolamine dehydratase.